The chain runs to 152 residues: Large ribosomal subunit protein bL9 (152 aa).

This sequence belongs to the bacterial ribosomal protein bL9 family.

Functionally, binds to the 23S rRNA. The protein is Large ribosomal subunit protein bL9 of Rippkaea orientalis (strain PCC 8801 / RF-1) (Cyanothece sp. (strain PCC 8801)).